The following is a 66-amino-acid chain: Ribosome biogenesis protein Nop10 (66 aa).

Belongs to the NOP10 family.

Functionally, involved in ribosome biogenesis; more specifically in 18S rRNA pseudouridylation and in cleavage of pre-rRNA. The protein is Ribosome biogenesis protein Nop10 of Desulfurococcus amylolyticus (strain DSM 18924 / JCM 16383 / VKM B-2413 / 1221n) (Desulfurococcus kamchatkensis).